Consider the following 583-residue polypeptide: Aspartate--tRNA ligase (583 aa).

Glu-169 provides a ligand contact to L-aspartate. The tract at residues 193-196 (QLFK) is aspartate. Arg-215 serves as a coordination point for L-aspartate. Residues 215–217 (RDE) and Gln-224 contribute to the ATP site. His-443 provides a ligand contact to L-aspartate. Glu-477 provides a ligand contact to ATP. Arg-484 lines the L-aspartate pocket. 529–532 (GIDR) is a binding site for ATP.

Belongs to the class-II aminoacyl-tRNA synthetase family. Type 1 subfamily. Homodimer.

Its subcellular location is the cytoplasm. The catalysed reaction is tRNA(Asp) + L-aspartate + ATP = L-aspartyl-tRNA(Asp) + AMP + diphosphate. Functionally, catalyzes the attachment of L-aspartate to tRNA(Asp) in a two-step reaction: L-aspartate is first activated by ATP to form Asp-AMP and then transferred to the acceptor end of tRNA(Asp). The sequence is that of Aspartate--tRNA ligase from Stenotrophomonas maltophilia (strain K279a).